A 118-amino-acid chain; its full sequence is Evasin P546 (118 aa).

The signal sequence occupies residues 1-21 (MKVLLYIAASCLMLLALNVSA). Disulfide bonds link Cys-38/Cys-59, Cys-55/Cys-96, Cys-72/Cys-101, and Cys-91/Cys-110. A glycan (N-linked (GlcNAc...) asparagine) is linked at Asn-45.

The protein localises to the secreted. Salivary chemokine-binding protein which binds to host chemokines CCL1, CCL3, CCL5 and CCL22. This Amblyomma cajennense (Cayenne tick) protein is Evasin P546.